Here is a 539-residue protein sequence, read N- to C-terminus: Acid-sensing ion channel 4 (539 aa).

Over 1 to 68 the chain is Cytoplasmic; the sequence is MPIEIVCKIK…GPGPHGLRRT (68 aa). The helical transmembrane segment at 69-89 threads the bilayer; sequence LWALALLTSLAAFLYQAAGLA. Residues 90–438 lie on the Extracellular side of the membrane; it reads RGYLTRPHLV…EQRAAYGLSA (349 aa). Disulfide bonds link Cys118-Cys202 and Cys180-Cys187. N-linked (GlcNAc...) asparagine glycans are attached at residues Asn191 and Asn243. Intrachain disulfides connect Cys296–Cys375, Cys318–Cys371, Cys322–Cys369, Cys331–Cys353, and Cys333–Cys345. N-linked (GlcNAc...) asparagine glycosylation occurs at Asn376. A helical membrane pass occupies residues 439–459; the sequence is LLGDLGGQMGLFIGASILTLL. Residues 452-454 carry the GAS motif; ion selectivity filter motif; that stretch reads GAS. Over 460-539 the chain is Cytoplasmic; that stretch reads EILDYIYEVS…PGGLFEDFAC (80 aa). Residues 501-531 form a disordered region; the sequence is EQSPCPSRGRVEGGGVSSLLPNHHHPHGPPG.

It belongs to the amiloride-sensitive sodium channel (TC 1.A.6) family. ASIC4 subfamily. In terms of assembly, homotrimer. Heterotrimer; with other ASIC proteins producing functional channels. In terms of tissue distribution, expressed in pituitary gland. Weakly expressed in brain, vestibular system and organ of Corti.

It localises to the cell membrane. In terms of biological role, does not exhibit measurable stand-alone pH-gated sodium channel activity but may form pH-gated heterotrimeric sodium channels. Its activity could also depend on alternative gating mechanisms. The chain is Acid-sensing ion channel 4 from Homo sapiens (Human).